A 150-amino-acid chain; its full sequence is Monooxygenase nsrS (150 aa).

This sequence belongs to the avfA family.

It functions in the pathway secondary metabolite biosynthesis. Its function is as follows. Monooxygenase; part of the gene cluster that mediates the biosynthesis of the tetrahydroxanthone dimer neosartorin, which exhibits antibacterial activity. The two different monomeric units appear to be synthesized by the same set of enzymes, among which the Baeyer-Villiger monooxygenase nsrF is the key enzyme for the divergence of the biosynthetic routes. The pathway begins with the synthesis of atrochrysone thioester by the polyketide synthase nsrB. The atrochrysone carboxyl ACP thioesterase nsrC then breaks the thioester bond and releases the atrochrysone carboxylic acid from AacuL. Atrochrysone carboxylic acid is decarboxylated by the decarboxylase nsrE, and oxidized by the anthrone oxygenase nsrD to yield emodin. Emodin is then reduced to emodin hydroquinone by the oxidoreductase nsrR. A-ring reduction by the short chain dehydrogenase nsrJ, dehydration by the scytalone dehydratase-like protein nsrI and probable spontaneous re-oxidation, results in overall deoxygenation to chrysophanol. The Baeyer-Villiger monooxygenase nsrF accepts chrysophanol as a substrate to insert one oxygen atom at two different positions to yield the precursors of both monomric units. NsrF is promiscuous/flexible in interacting with the 2 (non methylated and methylated) aromatic rings of chrysophanol, thus diverging the biosynthetic pathway at this point. After the hydrolysis of the lactones, methylesterification by the methyltransferase nsrG yields respectively moniliphenone and 2,2',6'-trihydroxy-4-methyl-6-methoxya-cyldiphenylmethanone. The next steps are the hydroxylation by the FAD-dependent monooxygenase nsrK, followed by isomerization by the monooxygenase nsrQ. The short chain dehydrogenase/reductase nsrO then catalyzes the C-5 ketoreduction to give the xanthone skeleton of blennolide C and 5-acetylblennolide A. The acetyltransferase nsrL has a strict substrate specificity and uses only blennolide A but not blennolide C to yield 5-acetylblennolide A as the single-acetylated product. In the final step of the biosynthesis, the heterodimerization of the 2 xanthones, blennolide C and 5-acetylblennolide A, is catalyzed by the cytochrome P450 monooxygenase nsrP. NsrP can utilize at least three different xanthones as its substrates to perform the dimerization reaction. The polypeptide is Monooxygenase nsrS (Aspergillus novofumigatus (strain IBT 16806)).